A 927-amino-acid polypeptide reads, in one-letter code: Transmembrane protein 132 homolog (927 aa).

The signal sequence occupies residues 1–18 (MLKKLWICISCIVTTALS). A helical transmembrane segment spans residues 749-769 (FHIFVLTIIGLIILFLFISFV). Residues 789–842 (LSSSSGSNSRQEETNEWVWLSQPQPPSSTISSGYSGNKSTAERQSSNGDDPSRT) form a disordered region. The span at 817 to 842 (TISSGYSGNKSTAERQSSNGDDPSRT) shows a compositional bias: polar residues.

The protein belongs to the TMEM132 family. As to quaternary structure, interacts with gex-3. As to expression, specifically expressed in neurons.

Its subcellular location is the membrane. In terms of biological role, regulates neuronal morphology via inhibition of the WAVE regulatory complex (WCR), a complex that controls F-actin cytoskeletal dynamics. The chain is Transmembrane protein 132 homolog from Caenorhabditis elegans.